Consider the following 396-residue polypeptide: Purine ribonucleoside efflux pump NepI (396 aa).

The Cytoplasmic portion of the chain corresponds to 1–21 (MSEFIAENRGANAITRPNWSA). Residues 22 to 42 (VFSVAFCVACLIIVEFLPVSL) traverse the membrane as a helical segment. Residues 43 to 54 (LTPMAQDLGISE) lie on the Periplasmic side of the membrane. Residues 55-75 (GVAGQSVTVTAFVAMFASLFI) form a helical membrane-spanning segment. Residues 76–85 (TQTIQATDRR) lie on the Cytoplasmic side of the membrane. A helical transmembrane segment spans residues 86 to 106 (YVVILFAVLLTLSCLLVSFAN). Residue Ser107 is a topological domain, periplasmic. A helical membrane pass occupies residues 108–128 (FSLLLIGRACLGVALGGFWAI). At 129–147 (SASLTMRLVPPRTVPKALS) the chain is on the cytoplasmic side. A helical transmembrane segment spans residues 148 to 168 (VIFGAVSIALVIAAPLGSFLG). The Periplasmic portion of the chain corresponds to 169–175 (ELIGWRN). Residues 176–196 (VFNAAAAMGVLCIFWIIKSLP) form a helical membrane-spanning segment. The Cytoplasmic segment spans residues 197–215 (SLPGEPSHQKQNTFRLLQR). A helical membrane pass occupies residues 216 to 236 (PGVMAGMIAIFMSFAGQFAFF). Topologically, residues 237 to 255 (TYIRPVYMNLAGFGVDGLT) are periplasmic. Residues 256–276 (LVLLSFGIASFVGTSLSSFIL) form a helical membrane-spanning segment. The Cytoplasmic segment spans residues 277–281 (KRSVK). Residues 282 to 302 (LALAGAPFVLALSALVLTLWG) form a helical membrane-spanning segment. Residues 303–305 (SDK) are Periplasmic-facing. A helical membrane pass occupies residues 306–326 (IVATGVAIIWGLTFALIPVGW). At 327-343 (STWITRSLADQAEKAGS) the chain is on the cytoplasmic side. A helical transmembrane segment spans residues 344-364 (IQVAVIQLANTCGAAIGGYAL). Residues 365–366 (DN) are Periplasmic-facing. The helical transmembrane segment at 367 to 387 (IGLTSPLMLSGTLMLLTALLV) threads the bilayer. Residues 388–396 (TAKVKMKKS) are Cytoplasmic-facing.

Belongs to the major facilitator superfamily. DHA1 family. NepI (TC 2.A.1.2.26) subfamily.

The protein resides in the cell inner membrane. It catalyses the reaction inosine(in) + H(+)(out) = inosine(out) + H(+)(in). The enzyme catalyses guanosine(in) + H(+)(out) = guanosine(out) + H(+)(in). Its function is as follows. Involved in the efflux of purine ribonucleosides, such as inosine and guanosine. The polypeptide is Purine ribonucleoside efflux pump NepI (Escherichia coli O6:K15:H31 (strain 536 / UPEC)).